Here is an 87-residue protein sequence, read N- to C-terminus: MKLTCVLVVLLLFLPYGDLITNNYIGGAARKVTPWRRNLKTRDVCDSLVGGNCIHNGCWCDQEAPHGNCCDTDGCTAAWWCPGTKWD.

Positions 1–19 (MKLTCVLVVLLLFLPYGDL) are cleaved as a signal peptide. A propeptide spanning residues 20-42 (ITNNYIGGAARKVTPWRRNLKTR) is cleaved from the precursor.

The protein belongs to the conotoxin O1 superfamily. Post-translationally, contains 4 disulfide bonds. As to expression, expressed by the venom duct.

Its subcellular location is the secreted. In Californiconus californicus (California cone), this protein is Conotoxin Cl12.3.